A 185-amino-acid chain; its full sequence is 3-hydroxyanthranilate 3,4-dioxygenase (185 aa).

Position 44 (Arg-44) interacts with O2. The Fe cation site is built by His-48, Glu-54, and His-95. Glu-54 lines the substrate pocket. 2 residues coordinate substrate: Arg-99 and Glu-109. Residues Cys-124, Cys-127, Cys-161, and Cys-164 each contribute to the a divalent metal cation site.

Belongs to the 3-HAO family. The cofactor is Fe(2+).

Its subcellular location is the cytoplasm. It carries out the reaction 3-hydroxyanthranilate + O2 = (2Z,4Z)-2-amino-3-carboxymuconate 6-semialdehyde. It functions in the pathway cofactor biosynthesis; NAD(+) biosynthesis; quinolinate from L-kynurenine: step 3/3. In terms of biological role, catalyzes the oxidative ring opening of 3-hydroxyanthranilate to 2-amino-3-carboxymuconate semialdehyde, which spontaneously cyclizes to quinolinate. The chain is 3-hydroxyanthranilate 3,4-dioxygenase from Podospora anserina (strain S / ATCC MYA-4624 / DSM 980 / FGSC 10383) (Pleurage anserina).